We begin with the raw amino-acid sequence, 486 residues long: Glutamyl-tRNA(Gln) amidotransferase subunit A (486 aa).

Catalysis depends on charge relay system residues lysine 76 and serine 151. Serine 175 (acyl-ester intermediate) is an active-site residue.

Belongs to the amidase family. GatA subfamily. As to quaternary structure, heterotrimer of A, B and C subunits.

The catalysed reaction is L-glutamyl-tRNA(Gln) + L-glutamine + ATP + H2O = L-glutaminyl-tRNA(Gln) + L-glutamate + ADP + phosphate + H(+). Allows the formation of correctly charged Gln-tRNA(Gln) through the transamidation of misacylated Glu-tRNA(Gln) in organisms which lack glutaminyl-tRNA synthetase. The reaction takes place in the presence of glutamine and ATP through an activated gamma-phospho-Glu-tRNA(Gln). The polypeptide is Glutamyl-tRNA(Gln) amidotransferase subunit A (Nitrosomonas eutropha (strain DSM 101675 / C91 / Nm57)).